The following is a 397-amino-acid chain: Cysteine desulfurase IscS (397 aa).

Pyridoxal 5'-phosphate-binding positions include 72–73, Asn-152, Gln-180, and 200–202; these read GS and SAH. Residue Lys-203 is modified to N6-(pyridoxal phosphate)lysine. A pyridoxal 5'-phosphate-binding site is contributed by Thr-238. The Cysteine persulfide intermediate role is filled by Cys-328. Cys-328 is a binding site for [2Fe-2S] cluster.

This sequence belongs to the class-V pyridoxal-phosphate-dependent aminotransferase family. NifS/IscS subfamily. In terms of assembly, homodimer. Forms a heterotetramer with IscU, interacts with other sulfur acceptors. The cofactor is pyridoxal 5'-phosphate.

The protein localises to the cytoplasm. It catalyses the reaction (sulfur carrier)-H + L-cysteine = (sulfur carrier)-SH + L-alanine. Its pathway is cofactor biosynthesis; iron-sulfur cluster biosynthesis. Functionally, master enzyme that delivers sulfur to a number of partners involved in Fe-S cluster assembly, tRNA modification or cofactor biosynthesis. Catalyzes the removal of elemental sulfur atoms from cysteine to produce alanine. Functions as a sulfur delivery protein for Fe-S cluster synthesis onto IscU, an Fe-S scaffold assembly protein, as well as other S acceptor proteins. This Clostridium botulinum (strain Kyoto / Type A2) protein is Cysteine desulfurase IscS.